Consider the following 260-residue polypeptide: Pro-thyrotropin-releasing hormone (260 aa).

Positions 1-24 are cleaved as a signal peptide; sequence MPSIQLPVLLLCLTLSGVCLNGRQ. The segment at 72-112 is disordered; it reads PQWLSKRQHPGKRYISDPEKRQHPGKRDVEEKASFGDIQKR. Position 79 is a pyrrolidone carboxylic acid (Q79). P81 is subject to Proline amide. The segment covering 85–112 has biased composition (basic and acidic residues); it reads YISDPEKRQHPGKRDVEEKASFGDIQKR. Q93 carries the pyrrolidone carboxylic acid modification. P95 carries the proline amide modification. Q113 bears the Pyrrolidone carboxylic acid mark. L115 is subject to Leucine amide. Q134 is modified (pyrrolidone carboxylic acid). P136 carries the post-translational modification Proline amide. Q163 bears the Pyrrolidone carboxylic acid mark. A Proline amide modification is found at P165. The span at 195–207 shows a compositional bias: basic and acidic residues; sequence KHQQFGNRDRDSD. Disordered regions lie at residues 195-217 and 238-260; these read KHQQ…PCDL and KEGV…ETEE. Q246 is subject to Pyrrolidone carboxylic acid. Position 248 is a proline amide (P248).

The protein belongs to the TRH family.

The protein resides in the secreted. Functionally, functions as a regulator of the biosynthesis of TSH in the anterior pituitary gland and as a neurotransmitter/ neuromodulator in the central and peripheral nervous systems. This is Pro-thyrotropin-releasing hormone (TRH) from Gallus gallus (Chicken).